The sequence spans 461 residues: Mycosin-3 (461 aa).

A signal peptide spans 1–25 (MIRAAFACLAATVVVAGWWTPPAWA). The Peptidase S8 domain maps to 64–397 (DPGVPTPSQT…AGNLDAVAAL (334 aa)). Active-site charge relay system residues include aspartate 95, histidine 126, and serine 342. A helical transmembrane segment spans residues 432–452 (AFAGAAALSVLVGLTAATVAI).

This sequence belongs to the peptidase S8 family.

Its subcellular location is the cell membrane. In Mycobacterium tuberculosis (strain ATCC 25618 / H37Rv), this protein is Mycosin-3.